The sequence spans 216 residues: Flagellin B2 (216 aa).

A propeptide spanning residues 1-12 is cleaved from the precursor; it reads MKIKEFMSNKKG. Residues N38, N72, N77, N113, N172, and N208 are each glycosylated (N-linked (GlcNAc...) asparagine).

This sequence belongs to the archaeal flagellin family. In terms of processing, N-linked glycans consist of the 779 Da trisaccharide beta-ManNAc(Thr)-(1-4)-beta-GlcNAc3NAcA-(1-3)-beta-GlcNAc.

Its subcellular location is the archaeal flagellum. Functionally, flagellin is the subunit protein which polymerizes to form the filaments of archaeal flagella. This is Flagellin B2 (flaB2) from Methanococcus voltae.